Consider the following 34-residue polypeptide: GASCDCHPFKGTYWFGTSNCPSGHGYRKKCDSFF.

Cys6 and Cys30 form a disulfide bridge.

In terms of tissue distribution, highly expressed by the mesenteries. Moderately expressed by the pharynx. Weakly expressed by the gonad and pedal disk. No expression in tentacle.

The protein localises to the secreted. Its subcellular location is the nematocyst. In terms of biological role, peptide with both antimicrobial and neurotoxin activities. Cationic AMP with antimicrobial activity against both Gram-positive bacteria (B.subtilis) and Gram-negative bacteria (E.coli and S.enterica). Shows no significant antimicrobial activity against bacteria S.aureus and P.aeruginosa, as well as the fungus C.albicans. In vivo, induces reversible paralytic activity towards the shrimp P.paucidens. May act by impairing sodium or potassium channels in the prey. This chain is Crassicorin-II, found in Urticina crassicornis (Mottled anemone).